Reading from the N-terminus, the 43-residue chain is Potassium channel toxin gamma-KTx 4.13 (43 aa).

4 disulfides stabilise this stretch: Cys-5-Cys-23, Cys-11-Cys-34, Cys-20-Cys-39, and Cys-24-Cys-41.

It belongs to the ergtoxin family. Gamma-KTx 4 subfamily. As to expression, expressed by the venom gland.

It is found in the secreted. In terms of biological role, reversibly blocks Kv11/ERG potassium channels. The protein is Potassium channel toxin gamma-KTx 4.13 of Centruroides noxius (Mexican scorpion).